The following is a 683-amino-acid chain: Acetyl-coenzyme A synthetase 2 (683 aa).

Residues 207 to 210 (RGGK) and Thr326 contribute to the CoA site. ATP-binding positions include 402–404 (GEP), 426–431 (DTFWQT), Asp517, and Arg532. Ser540 contacts CoA. Arg543 contributes to the ATP binding site. Arg613 is a binding site for CoA.

This sequence belongs to the ATP-dependent AMP-binding enzyme family.

The enzyme catalyses acetate + ATP + CoA = acetyl-CoA + AMP + diphosphate. The protein is Acetyl-coenzyme A synthetase 2 (ACS2) of Candida glabrata (strain ATCC 2001 / BCRC 20586 / JCM 3761 / NBRC 0622 / NRRL Y-65 / CBS 138) (Yeast).